A 191-amino-acid polypeptide reads, in one-letter code: Putative 3-methyladenine DNA glycosylase (191 aa).

This sequence belongs to the DNA glycosylase MPG family.

In Cutibacterium acnes (strain DSM 16379 / KPA171202) (Propionibacterium acnes), this protein is Putative 3-methyladenine DNA glycosylase.